The following is a 218-amino-acid chain: Octanoyltransferase (218 aa).

Positions 30–212 constitute a BPL/LPL catalytic domain; the sequence is ENTADEIWLV…HFYNILGYNA (183 aa). Substrate is bound by residues 69 to 76, 141 to 143, and 154 to 156; these read RGGQITYH, SLG, and GLA. Cysteine 172 functions as the Acyl-thioester intermediate in the catalytic mechanism.

Belongs to the LipB family.

The protein localises to the cytoplasm. It carries out the reaction octanoyl-[ACP] + L-lysyl-[protein] = N(6)-octanoyl-L-lysyl-[protein] + holo-[ACP] + H(+). It functions in the pathway protein modification; protein lipoylation via endogenous pathway; protein N(6)-(lipoyl)lysine from octanoyl-[acyl-carrier-protein]: step 1/2. Functionally, catalyzes the transfer of endogenously produced octanoic acid from octanoyl-acyl-carrier-protein onto the lipoyl domains of lipoate-dependent enzymes. Lipoyl-ACP can also act as a substrate although octanoyl-ACP is likely to be the physiological substrate. The sequence is that of Octanoyltransferase from Actinobacillus pleuropneumoniae serotype 5b (strain L20).